A 386-amino-acid polypeptide reads, in one-letter code: Methylthioribose-1-phosphate isomerase (386 aa).

The Proton donor role is filled by aspartate 258.

This sequence belongs to the eIF-2B alpha/beta/delta subunits family. MtnA subfamily.

It is found in the cytoplasm. The protein localises to the nucleus. The enzyme catalyses 5-(methylsulfanyl)-alpha-D-ribose 1-phosphate = 5-(methylsulfanyl)-D-ribulose 1-phosphate. It functions in the pathway amino-acid biosynthesis; L-methionine biosynthesis via salvage pathway; L-methionine from S-methyl-5-thio-alpha-D-ribose 1-phosphate: step 1/6. In terms of biological role, catalyzes the interconversion of methylthioribose-1-phosphate (MTR-1-P) into methylthioribulose-1-phosphate (MTRu-1-P). The chain is Methylthioribose-1-phosphate isomerase from Uncinocarpus reesii (strain UAMH 1704).